Reading from the N-terminus, the 146-residue chain is Hemoglobin subunit beta-1 (146 aa).

S1 is modified (N-acetylserine). Positions 2 to 146 constitute a Globin domain; it reads FLSAEEKGLV…VASALAHRYH (145 aa). K17 bears the N6-succinyllysine mark. Phosphoserine occurs at positions 44 and 50. K59 carries the post-translational modification N6-succinyllysine. Residues H63 and H92 each coordinate heme b. At R104 the chain carries Asymmetric dimethylarginine.

This sequence belongs to the globin family. In terms of assembly, heterotetramer of two alpha chains and two beta chains. Red blood cells.

Its function is as follows. Involved in oxygen transport from the lung to the various peripheral tissues. The sequence is that of Hemoglobin subunit beta-1 (HBB1) from Panthera leo (Lion).